The sequence spans 235 residues: Cytidylate kinase (235 aa).

An ATP-binding site is contributed by 11–19; sequence GPSGVGKST.

It belongs to the cytidylate kinase family. Type 1 subfamily.

Its subcellular location is the cytoplasm. It catalyses the reaction CMP + ATP = CDP + ADP. It carries out the reaction dCMP + ATP = dCDP + ADP. In Syntrophotalea carbinolica (strain DSM 2380 / NBRC 103641 / GraBd1) (Pelobacter carbinolicus), this protein is Cytidylate kinase.